The sequence spans 353 residues: Photosystem II D2 protein (353 aa).

The residue at position 2 (threonine 2) is an N-acetylthreonine. At threonine 2 the chain carries Phosphothreonine. Residues 41-61 form a helical membrane-spanning segment; the sequence is CAYFALGGWFTGTTFVTSWYT. Histidine 118 is a chlorophyll a binding site. The chain crosses the membrane as a helical span at residues 125 to 141; sequence GFMLRQFELARSVQLRP. 2 residues coordinate pheophytin a: glutamine 130 and asparagine 143. Residues 153–166 form a helical membrane-spanning segment; the sequence is VFVSVFLIYPLGQS. A chlorophyll a-binding site is contributed by histidine 198. The chain crosses the membrane as a helical span at residues 208–228; it reads AALLCAIHGATVENTLFEDGD. 2 residues coordinate a plastoquinone: histidine 215 and phenylalanine 262. Position 215 (histidine 215) interacts with Fe cation. A Fe cation-binding site is contributed by histidine 269. A helical transmembrane segment spans residues 279–295; that stretch reads GLWMSALGVVGLALNLR.

Belongs to the reaction center PufL/M/PsbA/D family. In terms of assembly, PSII is composed of 1 copy each of membrane proteins PsbA, PsbB, PsbC, PsbD, PsbE, PsbF, PsbH, PsbI, PsbJ, PsbK, PsbL, PsbM, PsbT, PsbX, PsbY, PsbZ, Psb30/Ycf12, at least 3 peripheral proteins of the oxygen-evolving complex and a large number of cofactors. It forms dimeric complexes. It depends on The D1/D2 heterodimer binds P680, chlorophylls that are the primary electron donor of PSII, and subsequent electron acceptors. It shares a non-heme iron and each subunit binds pheophytin, quinone, additional chlorophylls, carotenoids and lipids. There is also a Cl(-1) ion associated with D1 and D2, which is required for oxygen evolution. The PSII complex binds additional chlorophylls, carotenoids and specific lipids. as a cofactor.

It localises to the plastid. Its subcellular location is the chloroplast thylakoid membrane. The enzyme catalyses 2 a plastoquinone + 4 hnu + 2 H2O = 2 a plastoquinol + O2. Its function is as follows. Photosystem II (PSII) is a light-driven water:plastoquinone oxidoreductase that uses light energy to abstract electrons from H(2)O, generating O(2) and a proton gradient subsequently used for ATP formation. It consists of a core antenna complex that captures photons, and an electron transfer chain that converts photonic excitation into a charge separation. The D1/D2 (PsbA/PsbD) reaction center heterodimer binds P680, the primary electron donor of PSII as well as several subsequent electron acceptors. D2 is needed for assembly of a stable PSII complex. The polypeptide is Photosystem II D2 protein (Nandina domestica (Heavenly bamboo)).